The following is a 668-amino-acid chain: Biotin biosynthesis bifunctional protein BioWF (668 aa).

R293 contributes to the substrate binding site. 380 to 381 (GY) contacts pyridoxal 5'-phosphate. H405 contributes to the substrate binding site. Residues S451, 476-479 (DDAH), and 507-510 (TASK) each bind pyridoxal 5'-phosphate. At K510 the chain carries N6-(pyridoxal phosphate)lysine.

The protein in the N-terminal section; belongs to the BioW family. This sequence in the C-terminal section; belongs to the class-II pyridoxal-phosphate-dependent aminotransferase family. BioF subfamily. Homodimer. Requires Mg(2+) as cofactor. It depends on pyridoxal 5'-phosphate as a cofactor.

It catalyses the reaction heptanedioate + ATP + CoA = 6-carboxyhexanoyl-CoA + AMP + diphosphate. The enzyme catalyses 6-carboxyhexanoyl-[ACP] + L-alanine + H(+) = (8S)-8-amino-7-oxononanoate + holo-[ACP] + CO2. Its pathway is metabolic intermediate metabolism; pimeloyl-CoA biosynthesis; pimeloyl-CoA from pimelate: step 1/1. It participates in cofactor biosynthesis; biotin biosynthesis. In terms of biological role, catalyzes both the decarboxylative condensation of pimeloyl-[acyl-carrier protein] and L-alanine to produce 8-amino-7-oxononanoate (AON), [acyl-carrier protein], and carbon dioxide, and the transformation of pimelate into pimeloyl-CoA with concomitant hydrolysis of ATP to AMP. This Cutibacterium acnes (strain SK137) (Propionibacterium acnes) protein is Biotin biosynthesis bifunctional protein BioWF.